A 75-amino-acid polypeptide reads, in one-letter code: UPF0057 membrane protein At2g24040 (75 aa).

2 consecutive transmembrane segments (helical) span residues 4 to 24 and 33 to 53; these read SCELCCEIFIAILLPPVGVCL and FFICLILTCLGYLPGIIYAIY.

Belongs to the UPF0057 (PMP3) family.

It is found in the membrane. This Arabidopsis thaliana (Mouse-ear cress) protein is UPF0057 membrane protein At2g24040.